The primary structure comprises 321 residues: Lipoyl synthase (321 aa).

Residues C60, C65, C71, C86, C90, C93, and S299 each contribute to the [4Fe-4S] cluster site. Residues 72–288 (WEKKHATFMI…ETIGRTKGFL (217 aa)) enclose the Radical SAM core domain.

It belongs to the radical SAM superfamily. Lipoyl synthase family. It depends on [4Fe-4S] cluster as a cofactor.

The protein localises to the cytoplasm. The catalysed reaction is [[Fe-S] cluster scaffold protein carrying a second [4Fe-4S](2+) cluster] + N(6)-octanoyl-L-lysyl-[protein] + 2 oxidized [2Fe-2S]-[ferredoxin] + 2 S-adenosyl-L-methionine + 4 H(+) = [[Fe-S] cluster scaffold protein] + N(6)-[(R)-dihydrolipoyl]-L-lysyl-[protein] + 4 Fe(3+) + 2 hydrogen sulfide + 2 5'-deoxyadenosine + 2 L-methionine + 2 reduced [2Fe-2S]-[ferredoxin]. The protein operates within protein modification; protein lipoylation via endogenous pathway; protein N(6)-(lipoyl)lysine from octanoyl-[acyl-carrier-protein]: step 2/2. Functionally, catalyzes the radical-mediated insertion of two sulfur atoms into the C-6 and C-8 positions of the octanoyl moiety bound to the lipoyl domains of lipoate-dependent enzymes, thereby converting the octanoylated domains into lipoylated derivatives. The chain is Lipoyl synthase from Mesorhizobium japonicum (strain LMG 29417 / CECT 9101 / MAFF 303099) (Mesorhizobium loti (strain MAFF 303099)).